We begin with the raw amino-acid sequence, 366 residues long: Holliday junction branch migration complex subunit RuvB (366 aa).

The segment at 1 to 50 is disordered; the sequence is MAIISSKKQPPEPNGEPKQRRESAKAPSTENILKPEAAIDEQEQQEEGIR. A large ATPase domain (RuvB-L) region spans residues 13–210; it reads PNGEPKQRRE…FGLIQKLRFY (198 aa). A compositionally biased stretch (basic and acidic residues) spans 15–24; that stretch reads GEPKQRRESA. Residues isoleucine 49, arginine 50, glycine 91, lysine 94, threonine 95, threonine 96, 157-159, arginine 200, tyrosine 210, and arginine 247 contribute to the ATP site; that span reads EDY. Threonine 95 is a binding site for Mg(2+). Residues 211 to 281 form a small ATPAse domain (RuvB-S) region; the sequence is EVDELTQIVL…IASEALQLFQ (71 aa). The interval 284–366 is head domain (RuvB-H); sequence PCGLDWTDRQ…TPPNEQLSLL (83 aa). Arginine 339 and arginine 344 together coordinate DNA.

It belongs to the RuvB family. In terms of assembly, homohexamer. Forms an RuvA(8)-RuvB(12)-Holliday junction (HJ) complex. HJ DNA is sandwiched between 2 RuvA tetramers; dsDNA enters through RuvA and exits via RuvB. An RuvB hexamer assembles on each DNA strand where it exits the tetramer. Each RuvB hexamer is contacted by two RuvA subunits (via domain III) on 2 adjacent RuvB subunits; this complex drives branch migration. In the full resolvosome a probable DNA-RuvA(4)-RuvB(12)-RuvC(2) complex forms which resolves the HJ.

The protein resides in the cytoplasm. It carries out the reaction ATP + H2O = ADP + phosphate + H(+). Its function is as follows. The RuvA-RuvB-RuvC complex processes Holliday junction (HJ) DNA during genetic recombination and DNA repair, while the RuvA-RuvB complex plays an important role in the rescue of blocked DNA replication forks via replication fork reversal (RFR). RuvA specifically binds to HJ cruciform DNA, conferring on it an open structure. The RuvB hexamer acts as an ATP-dependent pump, pulling dsDNA into and through the RuvAB complex. RuvB forms 2 homohexamers on either side of HJ DNA bound by 1 or 2 RuvA tetramers; 4 subunits per hexamer contact DNA at a time. Coordinated motions by a converter formed by DNA-disengaged RuvB subunits stimulates ATP hydrolysis and nucleotide exchange. Immobilization of the converter enables RuvB to convert the ATP-contained energy into a lever motion, pulling 2 nucleotides of DNA out of the RuvA tetramer per ATP hydrolyzed, thus driving DNA branch migration. The RuvB motors rotate together with the DNA substrate, which together with the progressing nucleotide cycle form the mechanistic basis for DNA recombination by continuous HJ branch migration. Branch migration allows RuvC to scan DNA until it finds its consensus sequence, where it cleaves and resolves cruciform DNA. This is Holliday junction branch migration complex subunit RuvB from Nostoc punctiforme (strain ATCC 29133 / PCC 73102).